A 430-amino-acid chain; its full sequence is MRVGIKVLGCPKNEADCEILAGVLRERGHEIVFDVKDADVVVLDTCAFIEDAKRESIDEIFSFIDAKDQYSYKLVVKGCLVQRYYEELKKEIPEVDQWIGVVDPEEIANALEKGTDLVPNRPETVYRYRKRIDLEERPYAYVKISDGCDRGCTFCSIPSFKGSLRSRSIEDITHEVEDLLKEGKKEIILVAQDTTSYGIDLYRKQALPDLLRRLNSLNGEFWIRVMYLHPDHLTEEIISAMLELDKVVKYFDVPVQHGSDKILKLMGRTKSSEELKKMLSSIRERFPDAVLRTSIIVGFPGETEEDFEELKRFVEEIQFDKLGAFVYSDEEGTVAFNLKEKVDPEVAKRRQEELLLLQAEISNSRLDRFIGRKLKFLVEGKEGKFLVGRTWTEAPEVDGVVFVRGKGKIGDFLEVVIKEHDEYDMWGSVT.

Residues 1 to 116 (MRVGIKVLGC…IANALEKGTD (116 aa)) form the MTTase N-terminal domain. Residues C10, C46, C79, C148, C152, and C155 each coordinate [4Fe-4S] cluster. The Radical SAM core domain maps to 134-365 (LEERPYAYVK…LLQAEISNSR (232 aa)). Residues 367–430 (DRFIGRKLKF…DEYDMWGSVT (64 aa)) form the TRAM domain.

This sequence belongs to the methylthiotransferase family. RimO subfamily. [4Fe-4S] cluster is required as a cofactor.

It localises to the cytoplasm. The catalysed reaction is L-aspartate(89)-[ribosomal protein uS12]-hydrogen + (sulfur carrier)-SH + AH2 + 2 S-adenosyl-L-methionine = 3-methylsulfanyl-L-aspartate(89)-[ribosomal protein uS12]-hydrogen + (sulfur carrier)-H + 5'-deoxyadenosine + L-methionine + A + S-adenosyl-L-homocysteine + 2 H(+). Functionally, catalyzes the methylthiolation of an aspartic acid residue of ribosomal protein uS12. The sequence is that of Ribosomal protein uS12 methylthiotransferase RimO from Thermotoga sp. (strain RQ2).